The chain runs to 225 residues: ATP-dependent Clp protease proteolytic subunit (225 aa).

The active-site Nucleophile is the Ser-123. His-148 is a catalytic residue.

The protein belongs to the peptidase S14 family. Fourteen ClpP subunits assemble into 2 heptameric rings which stack back to back to give a disk-like structure with a central cavity, resembling the structure of eukaryotic proteasomes.

It localises to the cytoplasm. It carries out the reaction Hydrolysis of proteins to small peptides in the presence of ATP and magnesium. alpha-casein is the usual test substrate. In the absence of ATP, only oligopeptides shorter than five residues are hydrolyzed (such as succinyl-Leu-Tyr-|-NHMec, and Leu-Tyr-Leu-|-Tyr-Trp, in which cleavage of the -Tyr-|-Leu- and -Tyr-|-Trp bonds also occurs).. In terms of biological role, cleaves peptides in various proteins in a process that requires ATP hydrolysis. Has a chymotrypsin-like activity. Plays a major role in the degradation of misfolded proteins. This chain is ATP-dependent Clp protease proteolytic subunit, found in Chlorobium luteolum (strain DSM 273 / BCRC 81028 / 2530) (Pelodictyon luteolum).